The following is a 704-amino-acid chain: Ion-translocating oxidoreductase complex subunit C (704 aa).

4Fe-4S ferredoxin-type domains are found at residues 368 to 397 (MGAP…QQLY) and 407 to 436 (KATA…VQYF). Residues cysteine 377, cysteine 380, cysteine 383, cysteine 387, cysteine 416, cysteine 419, cysteine 422, and cysteine 426 each coordinate [4Fe-4S] cluster. The disordered stretch occupies residues 534 to 682 (QARAKQAAHP…AEPADPRKAA (149 aa)).

Belongs to the 4Fe4S bacterial-type ferredoxin family. RnfC subfamily. The complex is composed of six subunits: RsxA, RsxB, RsxC, RsxD, RsxE and RsxG. [4Fe-4S] cluster serves as cofactor.

The protein resides in the cell inner membrane. In terms of biological role, part of a membrane-bound complex that couples electron transfer with translocation of ions across the membrane. Required to maintain the reduced state of SoxR. In Salmonella enteritidis PT4 (strain P125109), this protein is Ion-translocating oxidoreductase complex subunit C.